The sequence spans 451 residues: Phosphoglucosamine mutase (451 aa).

The active-site Phosphoserine intermediate is Ser-101. Residues Ser-101, Asp-242, Asp-244, and Asp-246 each coordinate Mg(2+). Ser-101 carries the phosphoserine modification.

The protein belongs to the phosphohexose mutase family. The cofactor is Mg(2+). Activated by phosphorylation.

The catalysed reaction is alpha-D-glucosamine 1-phosphate = D-glucosamine 6-phosphate. Functionally, catalyzes the conversion of glucosamine-6-phosphate to glucosamine-1-phosphate. The polypeptide is Phosphoglucosamine mutase (Beijerinckia indica subsp. indica (strain ATCC 9039 / DSM 1715 / NCIMB 8712)).